Reading from the N-terminus, the 140-residue chain is Sex-regulated protein janus-B (140 aa).

Residue Arg42 coordinates substrate. Residue His69 is the Proton acceptor of the active site. 110-112 lines the substrate pocket; sequence SRT.

Belongs to the janus family.

Its function is as follows. JanA and janB regulate somatic sex differentiation. The chain is Sex-regulated protein janus-B (janB) from Drosophila simulans (Fruit fly).